Consider the following 347-residue polypeptide: Protein RecA (347 aa).

An ATP-binding site is contributed by 67–74 (GPESSGKT). Residues 326–347 (DKLLPGRAPSSEAQGTESGQEA) form a disordered region. Residues 336–347 (SEAQGTESGQEA) are compositionally biased toward polar residues.

It belongs to the RecA family.

The protein localises to the cytoplasm. In terms of biological role, can catalyze the hydrolysis of ATP in the presence of single-stranded DNA, the ATP-dependent uptake of single-stranded DNA by duplex DNA, and the ATP-dependent hybridization of homologous single-stranded DNAs. It interacts with LexA causing its activation and leading to its autocatalytic cleavage. The sequence is that of Protein RecA from Alkalilimnicola ehrlichii (strain ATCC BAA-1101 / DSM 17681 / MLHE-1).